Consider the following 258-residue polypeptide: UPF0246 protein YaaA (258 aa).

The protein belongs to the UPF0246 family.

The sequence is that of UPF0246 protein YaaA from Escherichia coli O157:H7.